A 101-amino-acid polypeptide reads, in one-letter code: Apolipoprotein C-II (101 aa).

The N-terminal stretch at 1–22 (MGARHLLALLLVLLVLGFEVQG) is a signal peptide. Residues 66–74 (TMDEKIRDM) form a lipid binding region. Residues 78 to 101 (STAAVSTYVGIFTDQLLSLLKGDE) are lipoprotein lipase cofactor.

Belongs to the apolipoprotein C2 family. In terms of processing, proapolipoprotein C-II is synthesized as a sialic acid containing glycoprotein which is subsequently desialylated prior to its proteolytic processing. Post-translationally, proapolipoprotein C-II, the major form found in plasma undergoes proteolytic cleavage of its N-terminal hexapeptide to generate apolipoprotein C-II, which occurs as the minor form in plasma.

It is found in the secreted. In terms of biological role, component of chylomicrons, very low-density lipoproteins (VLDL), low-density lipoproteins (LDL), and high-density lipoproteins (HDL) in plasma. Plays an important role in lipoprotein metabolism as an activator of lipoprotein lipase. Both proapolipoprotein C-II and apolipoprotein C-II can activate lipoprotein lipase. The chain is Apolipoprotein C-II (APOC2) from Tapirus indicus (Asiatic tapir).